Consider the following 291-residue polypeptide: Lipase (291 aa).

The first 17 residues, 1 to 17 (MRSSLVLFFVSAWTALA), serve as a signal peptide directing secretion. Residues 18 to 22 (SPIRR) constitute a propeptide that is removed on maturation. Cystine bridges form between Cys-44-Cys-290, Cys-58-Cys-63, and Cys-126-Cys-129. The active-site Nucleophile is Ser-168. Residues Asp-223 and His-280 each act as charge relay system in the active site.

This sequence belongs to the AB hydrolase superfamily. Lipase family.

It catalyses the reaction a triacylglycerol + H2O = a diacylglycerol + a fatty acid + H(+). The sequence is that of Lipase (LIP) from Thermomyces lanuginosus (Humicola lanuginosa).